The sequence spans 208 residues: Octanoyltransferase (208 aa).

The region spanning G31–A208 is the BPL/LPL catalytic domain. Substrate contacts are provided by residues R70–H77, A142–G144, and G155–A157. C173 serves as the catalytic Acyl-thioester intermediate.

It belongs to the LipB family.

It localises to the cytoplasm. It carries out the reaction octanoyl-[ACP] + L-lysyl-[protein] = N(6)-octanoyl-L-lysyl-[protein] + holo-[ACP] + H(+). Its pathway is protein modification; protein lipoylation via endogenous pathway; protein N(6)-(lipoyl)lysine from octanoyl-[acyl-carrier-protein]: step 1/2. Functionally, catalyzes the transfer of endogenously produced octanoic acid from octanoyl-acyl-carrier-protein onto the lipoyl domains of lipoate-dependent enzymes. Lipoyl-ACP can also act as a substrate although octanoyl-ACP is likely to be the physiological substrate. This Anaplasma phagocytophilum (strain HZ) protein is Octanoyltransferase.